Reading from the N-terminus, the 391-residue chain is Phosphoglycerate kinase (391 aa).

Residues 21 to 23 (DLN), Arg36, 59 to 62 (HLGR), Arg113, and Arg146 contribute to the substrate site. Residues Lys197, Glu319, and 345 to 348 (GGDT) contribute to the ATP site.

The protein belongs to the phosphoglycerate kinase family. As to quaternary structure, monomer.

The protein resides in the cytoplasm. The catalysed reaction is (2R)-3-phosphoglycerate + ATP = (2R)-3-phospho-glyceroyl phosphate + ADP. The protein operates within carbohydrate degradation; glycolysis; pyruvate from D-glyceraldehyde 3-phosphate: step 2/5. This chain is Phosphoglycerate kinase, found in Shewanella halifaxensis (strain HAW-EB4).